A 342-amino-acid chain; its full sequence is N-acetyl-gamma-glutamyl-phosphate reductase (342 aa).

The active site involves Cys-149.

This sequence belongs to the NAGSA dehydrogenase family. Type 1 subfamily.

The protein localises to the cytoplasm. It carries out the reaction N-acetyl-L-glutamate 5-semialdehyde + phosphate + NADP(+) = N-acetyl-L-glutamyl 5-phosphate + NADPH + H(+). The protein operates within amino-acid biosynthesis; L-arginine biosynthesis; N(2)-acetyl-L-ornithine from L-glutamate: step 3/4. In terms of biological role, catalyzes the NADPH-dependent reduction of N-acetyl-5-glutamyl phosphate to yield N-acetyl-L-glutamate 5-semialdehyde. The protein is N-acetyl-gamma-glutamyl-phosphate reductase of Cereibacter sphaeroides (strain ATCC 17025 / ATH 2.4.3) (Rhodobacter sphaeroides).